Consider the following 758-residue polypeptide: Thiosulfate reductase molybdopterin-containing subunit PhsA (758 aa).

A signal peptide (tat-type signal) is located at residues 1-30 (MSISRRSFLQGVGIGCSACALGAFPPGALA). The 4Fe-4S Mo/W bis-MGD-type domain occupies 41–97 (TTLTPSLCEMCSFRCPIQAQVVNNKTVFIQGNPSAPQQGTRICARGGSGVSLVNDPQ). Residues Cys-48, Cys-51, Cys-55, and Cys-83 each contribute to the [4Fe-4S] cluster site.

Belongs to the prokaryotic molybdopterin-containing oxidoreductase family. In terms of assembly, composed of three subunits: PhsA, PhsB and PhsC. It depends on [4Fe-4S] cluster as a cofactor. The cofactor is Mo-bis(molybdopterin guanine dinucleotide). Post-translationally, predicted to be exported by the Tat system. The position of the signal peptide cleavage has not been experimentally proven.

The protein resides in the periplasm. It carries out the reaction a quinone + hydrogen sulfide + sulfite + 2 H(+) = thiosulfate + a quinol. Its function is as follows. Component of the PhsABC thiosulfate reductase that catalyzes the reduction of thiosulfate to sulfite and hydrogen sulfide, with menaquinol as the sole electron donor. Proton motive force (PMF) is required to drive transmembrane electron transfer within the reductase. The PhsA subunit contains the active site molybdenum-bis(molybdopterin guanine dinucleotide) (Mo-bis-MGD) cofactor. The chain is Thiosulfate reductase molybdopterin-containing subunit PhsA from Salmonella typhimurium (strain LT2 / SGSC1412 / ATCC 700720).